The following is a 100-amino-acid chain: Small ribosomal subunit protein uS14c (100 aa).

It belongs to the universal ribosomal protein uS14 family. In terms of assembly, part of the 30S ribosomal subunit.

The protein localises to the plastid. Its subcellular location is the chloroplast. Its function is as follows. Binds 16S rRNA, required for the assembly of 30S particles. The polypeptide is Small ribosomal subunit protein uS14c (Pleurastrum terricola (Filamentous green alga)).